We begin with the raw amino-acid sequence, 160 residues long: Cyclic pyranopterin monophosphate synthase (160 aa).

Residues 73 to 75 and 110 to 111 each bind substrate; these read LCH and ME. Residue Asp-125 is part of the active site.

This sequence belongs to the MoaC family. As to quaternary structure, homohexamer; trimer of dimers.

It catalyses the reaction (8S)-3',8-cyclo-7,8-dihydroguanosine 5'-triphosphate = cyclic pyranopterin phosphate + diphosphate. It participates in cofactor biosynthesis; molybdopterin biosynthesis. Functionally, catalyzes the conversion of (8S)-3',8-cyclo-7,8-dihydroguanosine 5'-triphosphate to cyclic pyranopterin monophosphate (cPMP). The sequence is that of Cyclic pyranopterin monophosphate synthase from Pseudomonas paraeruginosa (strain DSM 24068 / PA7) (Pseudomonas aeruginosa (strain PA7)).